The following is a 127-amino-acid chain: Large ribosomal subunit protein bL12 (127 aa).

It belongs to the bacterial ribosomal protein bL12 family. In terms of assembly, homodimer. Part of the ribosomal stalk of the 50S ribosomal subunit. Forms a multimeric L10(L12)X complex, where L10 forms an elongated spine to which 2 to 4 L12 dimers bind in a sequential fashion. Binds GTP-bound translation factors.

Forms part of the ribosomal stalk which helps the ribosome interact with GTP-bound translation factors. Is thus essential for accurate translation. This is Large ribosomal subunit protein bL12 from Caulobacter vibrioides (strain ATCC 19089 / CIP 103742 / CB 15) (Caulobacter crescentus).